Here is a 452-residue protein sequence, read N- to C-terminus: Keratin, type I cytoskeletal 42 (452 aa).

A head region spans residues 4 to 93 (TTSIRQFSTS…GVSDALLGGS (90 aa)). Coiled-coil stretches lie at residues 93–132 (SEKETMQNLNDRLATYLDRVRALEEANTDLEVKIREWYKK) and 188–407 (NLRM…HLAT). A coil 1A region spans residues 94–129 (EKETMQNLNDRLATYLDRVRALEEANTDLEVKIREW). The IF rod domain occupies 94-405 (EKETMQNLND…RLLEGEDAHL (312 aa)). The tract at residues 130 to 147 (YKKQGPGPARDYSPYFKT) is linker 1. Residues 148–239 (IEDLRNKILA…KNHEEEMNAL (92 aa)) form a coil 1B region. The tract at residues 240-262 (RGQVGGDVNVEMDAAPGVDLSRI) is linker 12. Residues 263–401 (LNEMRDQYEK…ATYRRLLEGE (139 aa)) are coil 2. A tail region spans residues 402-452 (DAHLATQYSSSLASQASREGTVTSRQVRTIVEEVQDGKVVSSREQVHRSTH).

It belongs to the intermediate filament family. Heterodimer of a type I and a type II keratin. Colocalizes with KRT8/KRT18 filament network.

Its subcellular location is the cytoplasm. The protein is Keratin, type I cytoskeletal 42 of Rattus norvegicus (Rat).